The chain runs to 316 residues: Beta-agarase (316 aa).

The signal sequence occupies residues 1-18; sequence MKRKLFTICLASLQFACA. Positions 27-315 constitute a GH16 domain; the sequence is YEWDIYPVPA…WIRVYTLVPE (289 aa). Residues W78, 87-97, and 101-103 contribute to the substrate site; these read QRDHVSVSDGF and RAS. E167 functions as the Nucleophile in the catalytic mechanism. The active-site Proton donor is the E172. Substrate is bound at residue R197.

It belongs to the glycosyl hydrolase 16 family.

It catalyses the reaction Hydrolysis of (1-&gt;4)-beta-D-galactosidic linkages in agarose, giving the tetramer as the predominant product.. Functionally, cleaves the beta-1,4-linkages between beta-D-galactose and alpha-L-3,6-anhydro-galactose residues in agarose. Cleaves agarose in a random manner with retention of the anomeric-bond configuration, producing beta-anomers that give rise progressively to alpha-anomers when mutarotation takes place. The sequence is that of Beta-agarase from Phocaeicola plebeius (strain DSM 17135 / JCM 12973 / CCUG 54634 / M2) (Bacteroides plebeius).